A 121-amino-acid chain; its full sequence is Small ribosomal subunit protein uS13 (121 aa).

The tract at residues 94-121 is disordered; that stretch reads GLPMRGQRTRTNARTRKGPRKAAAALKK.

Belongs to the universal ribosomal protein uS13 family. As to quaternary structure, part of the 30S ribosomal subunit. Forms a loose heterodimer with protein S19. Forms two bridges to the 50S subunit in the 70S ribosome.

Located at the top of the head of the 30S subunit, it contacts several helices of the 16S rRNA. In the 70S ribosome it contacts the 23S rRNA (bridge B1a) and protein L5 of the 50S subunit (bridge B1b), connecting the 2 subunits; these bridges are implicated in subunit movement. Contacts the tRNAs in the A and P-sites. The chain is Small ribosomal subunit protein uS13 from Polaromonas sp. (strain JS666 / ATCC BAA-500).